We begin with the raw amino-acid sequence, 236 residues long: Phosphoribosylaminoimidazole-succinocarboxamide synthase (236 aa).

The protein belongs to the SAICAR synthetase family.

It catalyses the reaction 5-amino-1-(5-phospho-D-ribosyl)imidazole-4-carboxylate + L-aspartate + ATP = (2S)-2-[5-amino-1-(5-phospho-beta-D-ribosyl)imidazole-4-carboxamido]succinate + ADP + phosphate + 2 H(+). The protein operates within purine metabolism; IMP biosynthesis via de novo pathway; 5-amino-1-(5-phospho-D-ribosyl)imidazole-4-carboxamide from 5-amino-1-(5-phospho-D-ribosyl)imidazole-4-carboxylate: step 1/2. The chain is Phosphoribosylaminoimidazole-succinocarboxamide synthase from Pseudomonas entomophila (strain L48).